The sequence spans 307 residues: Probable transposase for transposon Tn903 (307 aa).

Functionally, required for transposition of transposon Tn903. This chain is Probable transposase for transposon Tn903, found in Escherichia coli.